A 511-amino-acid polypeptide reads, in one-letter code: MLTMGTALSQQVDANWQTYIMIAVYFLILMLLAFTYKQATGNLSEYMLGGRSIGPYITALSAGASDMSGWMIMGLPGSVYSTGLSAMWITIGLTLGAYINYFVVAPRLRVYTELAGDAITLPDFFKNRLNDKNNVLKIISGLIIVVFFTLYTHSGFVSGGKLFESAFGLDYHFGLILVAFIVIFYTFFGGYLAVSITDFFQGVIMLIAMVMVPIVAMMNLNGWGTFHDVAAMKPTNLNLFKGLSFIGIISLFSWGLGYFGQPHIIVRFMSIKSHKMLPKARRLGISWMAVGLLGAVAVGLTGIAFVPAYHIKLEDPETLFIVMSQVLFHPLVGGFLLAAILAAIMSTISSQLLVTSSSLTEDFYKLIRGEEKAKTDQKEFVMIGRLSVLVVAIVAIAIAWNPNDTILNLVGNAWAGFGASFSPLVLFALYWKGLTRAGAVSGMVSGALVVIVWIAWIKPLAHINEIFGLYEIIPGFIVSVIVTYVVSKLTKKPGAFVETDLNKVRDIVREK.

13 consecutive transmembrane segments (helical) span residues 16–36, 53–73, 84–104, 138–158, 173–193, 199–219, 239–259, 285–305, 326–346, 380–400, 409–429, 437–457, and 466–486; these read WQTY…AFTY, IGPY…WMIM, LSAM…YFVV, IISG…GFVS, FGLI…GYLA, FFQG…AMMN, LFKG…LGYF, ISWM…GIAF, VLFH…AIMS, FVMI…AIAW, LVGN…LFAL, AGAV…IAWI, and IFGL…TYVV.

This sequence belongs to the sodium:solute symporter (SSF) (TC 2.A.21) family.

It is found in the cell membrane. It carries out the reaction L-proline(in) + Na(+)(in) = L-proline(out) + Na(+)(out). In terms of biological role, catalyzes the sodium-dependent uptake of extracellular L-proline. Since most S.aureus strains are L-proline auxotrophs, this transporter may aid the bacterial persistence during an infection of tissues with low proline concentrations. This is Sodium/proline symporter from Staphylococcus aureus.